Consider the following 258-residue polypeptide: Indole-3-glycerol phosphate synthase (258 aa).

This sequence belongs to the TrpC family.

It catalyses the reaction 1-(2-carboxyphenylamino)-1-deoxy-D-ribulose 5-phosphate + H(+) = (1S,2R)-1-C-(indol-3-yl)glycerol 3-phosphate + CO2 + H2O. It functions in the pathway amino-acid biosynthesis; L-tryptophan biosynthesis; L-tryptophan from chorismate: step 4/5. The protein is Indole-3-glycerol phosphate synthase of Geobacillus sp. (strain WCH70).